The chain runs to 96 residues: MKKVIMALGVLAFANALMATDVKALAKSCAACHGVKFEKKALGKSKIVNMMSEAEIEKDLMDFKSGANKNPIMSAQAKKLSDEDIKALAKYIPTLK.

Positions 1–19 (MKKVIMALGVLAFANALMA) are cleaved as a signal peptide. Residues Cys-29, Cys-32, His-33, and Met-73 each contribute to the heme c site.

This sequence belongs to the cytochrome c family. Binds 1 heme c group covalently per subunit.

The protein resides in the periplasm. Functionally, natural electron acceptor for a formate dehydrogenase. The sequence is that of Cytochrome c-553 from Helicobacter pylori (strain ATCC 700392 / 26695) (Campylobacter pylori).